The primary structure comprises 2364 residues: Spectrin beta chain, non-erythrocytic 1 (2364 aa).

At Thr-2 the chain carries N-acetylthreonine. An actin-binding region spans residues 2 to 275; the sequence is TTTVATDYDN…IITYVVTYYH (274 aa). Phosphoserine occurs at positions 14 and 36. Calponin-homology (CH) domains lie at 54–158 and 173–278; these read AVQK…LRFQ and KSAK…HYFS. Lys-90 is subject to N6-acetyllysine. At Ser-228 the chain carries Phosphoserine. Spectrin repeat units lie at residues 303–411, 423–525, 530–636, 639–742, 745–847, 850–952, 957–1060, 1063–1166, 1170–1258, 1276–1376, 1381–1482, 1486–1590, 1592–1696, 1698–1801, and 1805–1907; these read MIEK…LALR, LARR…QRLE, LQKI…RLEE, RLWK…RLEE, LLHQ…ALQD, ALYK…DALL, IQNY…SLGE, KLQQ…NLLS, AYQQ…DRHR, DLQK…AQRL, KAEL…HNLL, EIHQ…RLEE, HRAQ…KLDE, HRLF…TQIL, and YELH…RVRL. Phosphoserine is present on residues Ser-817, Ser-825, Ser-903, Ser-1057, Ser-1076, Ser-1079, and Ser-1237. Phosphoserine occurs at positions 1388, 1447, and 1557. The segment at 1563–2093 is interaction with ANK2; it reads IRQRLADLKQ…LLEVRRQQEE (531 aa). The residue at position 1805 (Tyr-1805) is a Phosphotyrosine. An N6-acetyllysine mark is found at Lys-1815, Lys-1913, and Lys-1989. 2 Spectrin repeats span residues 1914–2014 and 2018–2097; these read FRFF…EWLR and EVHQ…EERK. Positions 2089 to 2196 are disordered; sequence RQQEEEERKR…TLPARTQETP (108 aa). Phosphoserine occurs at positions 2102, 2128, and 2138. Residues 2115–2131 show a composition bias toward polar residues; that stretch reads SQQQWDTSKGEQVSQNG. Over residues 2145–2166 the composition is skewed to polar residues; sequence VDTSEMVNGATEQRTSSKESSP. Thr-2147 carries the phosphothreonine modification. Residue Ser-2148 is modified to Phosphoserine. Residues 2149–2177 form a mediates interaction with CAMSAP1 region; that stretch reads EMVNGATEQRTSSKESSPIPSPTSDRKAK. The residue at position 2159 (Thr-2159) is a Phosphothreonine. Phosphoserine occurs at positions 2160, 2161, 2164, 2165, and 2169. Phosphothreonine is present on Thr-2171. Ser-2172 and Ser-2184 each carry phosphoserine. A compositionally biased stretch (polar residues) spans 2184-2196; that stretch reads SAATLPARTQETP. 2 positions are modified to phosphothreonine: Thr-2187 and Thr-2195. Residues 2197–2307 form the PH domain; the sequence is SAQMEGFLNR…WIQAISSAIS (111 aa). A disordered region spans residues 2309–2364; it reads DKHEVSASTQSTPASSRAQTLPTSVVTITSESSPGKREKDKEKDKEKRFSLFGKKK. Residues Ser-2314 and Ser-2319 each carry the phosphoserine modification. Positions 2314 to 2341 are enriched in polar residues; the sequence is SASTQSTPASSRAQTLPTSVVTITSESS. Thr-2320 bears the Phosphothreonine mark. A glycan (O-linked (GlcNAc) serine) is linked at Ser-2324. Position 2328 is a phosphothreonine (Thr-2328). 2 positions are modified to phosphoserine: Ser-2340 and Ser-2341. Residues 2342 to 2357 show a composition bias toward basic and acidic residues; the sequence is PGKREKDKEKDKEKRF.

Belongs to the spectrin family. As to quaternary structure, interacts with CAMSAP1. Interacts with ANK2. Interacts with CPNE4 (via VWFA domain). Like erythrocyte spectrin, the spectrin-like proteins are capable to form dimers which can further associate to tetramers. Can form heterodimers with SPTAN1. Isoform Short cannot bind to the axonal protein fodaxin. In terms of tissue distribution, isoform 2 is present in brain, lung and kidney (at protein level).

It localises to the cytoplasm. The protein localises to the cytoskeleton. Its subcellular location is the myofibril. It is found in the sarcomere. The protein resides in the m line. It localises to the cytosol. The protein localises to the cell membrane. Functionally, fodrin, which seems to be involved in secretion, interacts with calmodulin in a calcium-dependent manner and is thus candidate for the calcium-dependent movement of the cytoskeleton at the membrane. Plays a critical role in central nervous system development and function. The chain is Spectrin beta chain, non-erythrocytic 1 (SPTBN1) from Homo sapiens (Human).